A 207-amino-acid polypeptide reads, in one-letter code: Superoxide dismutase [Mn] (207 aa).

Mn(2+)-binding residues include His28, His76, Asp160, and His164.

The protein belongs to the iron/manganese superoxide dismutase family. It depends on Mn(2+) as a cofactor.

The enzyme catalyses 2 superoxide + 2 H(+) = H2O2 + O2. Destroys superoxide anion radicals which are normally produced within the cells and which are toxic to biological systems. This chain is Superoxide dismutase [Mn] (sodA), found in Mycobacterium avium.